The sequence spans 346 residues: Cyclin-dependent kinase 20 (346 aa).

The Protein kinase domain occupies 4–288 (YCILGRIGEG…ASQALLHQYF (285 aa)). ATP contacts are provided by residues 10-18 (IGEGAHGIV) and lysine 33. The active-site Proton acceptor is aspartate 127. Positions 298-324 (SELPIPQRPGGPAPKAHPGPPHVHDFH) are disordered. Residues 303-318 (PQRPGGPAPKAHPGPP) show a composition bias toward pro residues.

The protein belongs to the protein kinase superfamily. CMGC Ser/Thr protein kinase family. CDC2/CDKX subfamily. Monomer. Interacts with MAK. Interacts with TBC1D32.

Its subcellular location is the nucleus. It localises to the cytoplasm. The protein resides in the cell projection. The protein localises to the cilium. It carries out the reaction L-seryl-[protein] + ATP = O-phospho-L-seryl-[protein] + ADP + H(+). The enzyme catalyses L-threonyl-[protein] + ATP = O-phospho-L-threonyl-[protein] + ADP + H(+). In terms of biological role, involved in cell growth. Activates CDK2, a kinase involved in the control of the cell cycle, by phosphorylating residue 'Thr-160'. Required for high-level Shh responses in the developing neural tube. Together with TBC1D32, controls the structure of the primary cilium by coordinating assembly of the ciliary membrane and axoneme, allowing GLI2 to be properly activated in response to SHH signaling. The sequence is that of Cyclin-dependent kinase 20 (Cdk20) from Mus musculus (Mouse).